A 162-amino-acid chain; its full sequence is Cadmium metallothionein (162 aa).

The propeptide occupies 1-2 (MD).

Functionally, the metallothioneins are involved in the cellular sequestration of toxic metal ions. This is Cadmium metallothionein (MTT1) from Tetrahymena thermophila.